The primary structure comprises 220 residues: Phosphoribosylformylglycinamidine synthase subunit PurQ (220 aa).

A Glutamine amidotransferase type-1 domain is found at 2-220 (RVGVVVFPGS…LRSVLAGAKV (219 aa)). Cys85 functions as the Nucleophile in the catalytic mechanism. Residues His193 and Glu195 contribute to the active site.

Part of the FGAM synthase complex composed of 1 PurL, 1 PurQ and 2 PurS subunits.

It is found in the cytoplasm. It catalyses the reaction N(2)-formyl-N(1)-(5-phospho-beta-D-ribosyl)glycinamide + L-glutamine + ATP + H2O = 2-formamido-N(1)-(5-O-phospho-beta-D-ribosyl)acetamidine + L-glutamate + ADP + phosphate + H(+). The enzyme catalyses L-glutamine + H2O = L-glutamate + NH4(+). The protein operates within purine metabolism; IMP biosynthesis via de novo pathway; 5-amino-1-(5-phospho-D-ribosyl)imidazole from N(2)-formyl-N(1)-(5-phospho-D-ribosyl)glycinamide: step 1/2. In terms of biological role, part of the phosphoribosylformylglycinamidine synthase complex involved in the purines biosynthetic pathway. Catalyzes the ATP-dependent conversion of formylglycinamide ribonucleotide (FGAR) and glutamine to yield formylglycinamidine ribonucleotide (FGAM) and glutamate. The FGAM synthase complex is composed of three subunits. PurQ produces an ammonia molecule by converting glutamine to glutamate. PurL transfers the ammonia molecule to FGAR to form FGAM in an ATP-dependent manner. PurS interacts with PurQ and PurL and is thought to assist in the transfer of the ammonia molecule from PurQ to PurL. The chain is Phosphoribosylformylglycinamidine synthase subunit PurQ from Rubrobacter xylanophilus (strain DSM 9941 / JCM 11954 / NBRC 16129 / PRD-1).